The chain runs to 345 residues: S-adenosylmethionine:tRNA ribosyltransferase-isomerase (345 aa).

It belongs to the QueA family. As to quaternary structure, monomer.

It is found in the cytoplasm. The enzyme catalyses 7-aminomethyl-7-carbaguanosine(34) in tRNA + S-adenosyl-L-methionine = epoxyqueuosine(34) in tRNA + adenine + L-methionine + 2 H(+). It functions in the pathway tRNA modification; tRNA-queuosine biosynthesis. Its function is as follows. Transfers and isomerizes the ribose moiety from AdoMet to the 7-aminomethyl group of 7-deazaguanine (preQ1-tRNA) to give epoxyqueuosine (oQ-tRNA). This is S-adenosylmethionine:tRNA ribosyltransferase-isomerase from Azoarcus sp. (strain BH72).